Reading from the N-terminus, the 103-residue chain is uncharacterized protein (103 aa).

The next 2 helical transmembrane spans lie at 42-62 and 65-85; these read PFPL…VLLA and TGTL…FICA.

The protein localises to the membrane. This is an uncharacterized protein from Saccharomyces cerevisiae (strain ATCC 204508 / S288c) (Baker's yeast).